We begin with the raw amino-acid sequence, 285 residues long: Protease HtpX homolog (285 aa).

Helical transmembrane passes span 7-27 and 30-50; these read TAMLMAAITALFIVIGGMIGG and GMTIALLFALGMNFFSYWFSD. Histidine 131 provides a ligand contact to Zn(2+). Glutamate 132 is a catalytic residue. Histidine 135 contributes to the Zn(2+) binding site. 2 helical membrane passes run 146-166 and 177-197; these read ITATMAGAISALANFAMFFGG and IAGIAVALLAPIAGALIQMAI. A Zn(2+)-binding site is contributed by glutamate 202.

The protein belongs to the peptidase M48B family. It depends on Zn(2+) as a cofactor.

It localises to the cell inner membrane. The protein is Protease HtpX homolog of Burkholderia cenocepacia (strain HI2424).